A 204-amino-acid chain; its full sequence is Proteasome subunit beta 1 (204 aa).

Positions 1-9 are cleaved as a propeptide — removed in mature form; by autocatalysis; that stretch reads MSYEYGTGA. The active-site Nucleophile is the Thr-10.

This sequence belongs to the peptidase T1B family. The 20S proteasome core is composed of 14 alpha and 14 beta subunits that assemble into four stacked heptameric rings, resulting in a barrel-shaped structure. The two inner rings, each composed of seven catalytic beta subunits, are sandwiched by two outer rings, each composed of seven alpha subunits. The catalytic chamber with the active sites is on the inside of the barrel. Has a gated structure, the ends of the cylinder being occluded by the N-termini of the alpha-subunits. Is capped at one or both ends by the proteasome regulatory ATPase, PAN.

The protein localises to the cytoplasm. The enzyme catalyses Cleavage of peptide bonds with very broad specificity.. With respect to regulation, the formation of the proteasomal ATPase PAN-20S proteasome complex, via the docking of the C-termini of PAN into the intersubunit pockets in the alpha-rings, triggers opening of the gate for substrate entry. Interconversion between the open-gate and close-gate conformations leads to a dynamic regulation of the 20S proteasome proteolysis activity. Component of the proteasome core, a large protease complex with broad specificity involved in protein degradation. The sequence is that of Proteasome subunit beta 1 from Hyperthermus butylicus (strain DSM 5456 / JCM 9403 / PLM1-5).